The primary structure comprises 408 residues: Argininosuccinate synthase (408 aa).

ATP is bound by residues 10–18 and Ala37; that span reads AYSGGLDTS. 2 residues coordinate L-citrulline: Tyr90 and Ser95. Gly120 is a binding site for ATP. L-aspartate is bound by residues Thr122, Asn126, and Asp127. Position 126 (Asn126) interacts with L-citrulline. L-citrulline contacts are provided by Arg130, Ser182, Ser191, Glu267, and Tyr279.

Belongs to the argininosuccinate synthase family. Type 1 subfamily. As to quaternary structure, homotetramer.

The protein localises to the cytoplasm. The enzyme catalyses L-citrulline + L-aspartate + ATP = 2-(N(omega)-L-arginino)succinate + AMP + diphosphate + H(+). It participates in amino-acid biosynthesis; L-arginine biosynthesis; L-arginine from L-ornithine and carbamoyl phosphate: step 2/3. In Paraburkholderia phytofirmans (strain DSM 17436 / LMG 22146 / PsJN) (Burkholderia phytofirmans), this protein is Argininosuccinate synthase.